We begin with the raw amino-acid sequence, 63 residues long: Sec-independent protein translocase protein TatA (63 aa).

Residues 1-21 (MGSFSMWHWLIVLVIVLLLFG) form a helical membrane-spanning segment. Positions 42–63 (GMTDDDAPDTAKTVDHKADETK) are disordered. Residues 53 to 63 (KTVDHKADETK) show a composition bias toward basic and acidic residues.

This sequence belongs to the TatA/E family. The Tat system comprises two distinct complexes: a TatABC complex, containing multiple copies of TatA, TatB and TatC subunits, and a separate TatA complex, containing only TatA subunits. Substrates initially bind to the TatABC complex, which probably triggers association of the separate TatA complex to form the active translocon.

The protein resides in the cell inner membrane. Part of the twin-arginine translocation (Tat) system that transports large folded proteins containing a characteristic twin-arginine motif in their signal peptide across membranes. TatA could form the protein-conducting channel of the Tat system. The sequence is that of Sec-independent protein translocase protein TatA from Rhizobium etli (strain CIAT 652).